The primary structure comprises 240 residues: Late expression factor 5 homolog (240 aa).

This sequence belongs to the baculoviridae LEF-5 family.

In terms of biological role, required for late and very late gene expression. The polypeptide is Late expression factor 5 homolog (Tortricidae (ClGV)).